A 368-amino-acid chain; its full sequence is tRNA/tmRNA (uracil-C(5))-methyltransferase (368 aa).

Positions 190, 218, 223, 239, and 301 each coordinate S-adenosyl-L-methionine. Cysteine 326 functions as the Nucleophile in the catalytic mechanism. The Proton acceptor role is filled by glutamate 360.

The protein belongs to the class I-like SAM-binding methyltransferase superfamily. RNA M5U methyltransferase family. TrmA subfamily.

The catalysed reaction is uridine(54) in tRNA + S-adenosyl-L-methionine = 5-methyluridine(54) in tRNA + S-adenosyl-L-homocysteine + H(+). It carries out the reaction uridine(341) in tmRNA + S-adenosyl-L-methionine = 5-methyluridine(341) in tmRNA + S-adenosyl-L-homocysteine + H(+). Functionally, dual-specificity methyltransferase that catalyzes the formation of 5-methyluridine at position 54 (m5U54) in all tRNAs, and that of position 341 (m5U341) in tmRNA (transfer-mRNA). This chain is tRNA/tmRNA (uracil-C(5))-methyltransferase, found in Photobacterium profundum (strain SS9).